Reading from the N-terminus, the 253-residue chain is Triosephosphate isomerase (253 aa).

2 residues coordinate substrate: asparagine 12 and lysine 14. Histidine 96 (electrophile) is an active-site residue. Residue glutamate 169 is the Proton acceptor of the active site.

The protein belongs to the triosephosphate isomerase family. Homodimer.

The protein localises to the cytoplasm. The enzyme catalyses D-glyceraldehyde 3-phosphate = dihydroxyacetone phosphate. Its pathway is carbohydrate biosynthesis; gluconeogenesis. The protein operates within carbohydrate degradation; glycolysis; D-glyceraldehyde 3-phosphate from glycerone phosphate: step 1/1. Its function is as follows. Antigen to the host M.1 monoclonal antibody. The chain is Triosephosphate isomerase (TPI) from Schistosoma mansoni (Blood fluke).